The chain runs to 689 residues: MSAQNLLVEIGTEELPPKALRKLAEAFAANLTAELETLELAHQGVSWYASPRRLGLRVIALDAKQQDKEVEKRGPAIKAAFDADGNPTKAAMGWARGCGIEVKDAQTLETDKGAWLLHLAKVAGQETKTLMVDVINKALAKLPIPKPMRWGANKTQFIRPVHTVTILLGDELVTGEVLGKQVSNQLQGHRFHHPEKITINHADDIFDVLKSAYVIADYEQRKAQIRAQIEAAAKAINAVVAMDEDLLEEVTSLVEWPVTLTATFEEEFLAVPAEALIYTMKDDQKYFPLLDQNGKLLNKFLFVSNIESKDPSVVISGNEKVVRPRLADAQFFFESDKKKTLESRLESLDSVLFQKQLGTLKDKSARISELAGYIAQQLGADKELAQRAGLLSKTDLMTEMVMEFTDIQGVMGMHYARFDGEAEDVALAQNEQYMPRFAGDSLPTNLISCAVAIADKFDTLVGIFGIGQAPKGDKDPFALRRAAIGALRIMVEKELPLDILDLVAKSQTLFGDKLTNLNVSTDVFEFMLGRFRAWYQDEGIEVDVIQAVLARRPTKPVDFDRRVKAVSHFRTLDAAEALAAANKRVSNILAKNDITSEGNVDESLLTDDAEKVLAAQVAKFATELAPLYASGNYQEALSQLAGIRQSVDSFFDNVMVMADDEAVKQNRLALLSQLSGLFLGIADISVLQK.

It belongs to the class-II aminoacyl-tRNA synthetase family. As to quaternary structure, tetramer of two alpha and two beta subunits.

Its subcellular location is the cytoplasm. The enzyme catalyses tRNA(Gly) + glycine + ATP = glycyl-tRNA(Gly) + AMP + diphosphate. The polypeptide is Glycine--tRNA ligase beta subunit (Pseudoalteromonas translucida (strain TAC 125)).